The primary structure comprises 294 residues: Cytidine deaminase (294 aa).

CMP/dCMP-type deaminase domains lie at 48–168 (DEDA…FGPK) and 186–294 (LTGD…VLLG). Position 89-91 (89-91 (NME)) interacts with substrate. Residue H102 participates in Zn(2+) binding. E104 serves as the catalytic Proton donor. 2 residues coordinate Zn(2+): C129 and C132.

This sequence belongs to the cytidine and deoxycytidylate deaminase family. In terms of assembly, homodimer. Requires Zn(2+) as cofactor.

The catalysed reaction is cytidine + H2O + H(+) = uridine + NH4(+). It catalyses the reaction 2'-deoxycytidine + H2O + H(+) = 2'-deoxyuridine + NH4(+). This enzyme scavenges exogenous and endogenous cytidine and 2'-deoxycytidine for UMP synthesis. This is Cytidine deaminase from Salmonella agona (strain SL483).